Here is a 388-residue protein sequence, read N- to C-terminus: Phosphopentomutase (388 aa).

Mn(2+)-binding residues include Asp-10, Asp-282, His-287, Asp-323, His-324, and His-335.

This sequence belongs to the phosphopentomutase family. The cofactor is Mn(2+).

It localises to the cytoplasm. It catalyses the reaction 2-deoxy-alpha-D-ribose 1-phosphate = 2-deoxy-D-ribose 5-phosphate. It carries out the reaction alpha-D-ribose 1-phosphate = D-ribose 5-phosphate. Its pathway is carbohydrate degradation; 2-deoxy-D-ribose 1-phosphate degradation; D-glyceraldehyde 3-phosphate and acetaldehyde from 2-deoxy-alpha-D-ribose 1-phosphate: step 1/2. Isomerase that catalyzes the conversion of deoxy-ribose 1-phosphate (dRib-1-P) and ribose 1-phosphate (Rib-1-P) to deoxy-ribose 5-phosphate (dRib-5-P) and ribose 5-phosphate (Rib-5-P), respectively. The protein is Phosphopentomutase of Acetivibrio thermocellus (strain ATCC 27405 / DSM 1237 / JCM 9322 / NBRC 103400 / NCIMB 10682 / NRRL B-4536 / VPI 7372) (Clostridium thermocellum).